The following is a 404-amino-acid chain: Protein translocase subunit SecD (404 aa).

6 helical membrane-spanning segments follow: residues 7–27 (HYIWLFLVIFVPALILYFNKV), 239–259 (LIALGVISVFMIAIYKIPGIV), 262–282 (IALLINGVLVLGLLSGIGAAL), 283–303 (TLPGIAGFILTLGMAVDSNVI), 330–350 (FPAIIDGNITTLLVAAVLFFL), and 357–377 (GFAVTLSLGVVATIITGVFVS).

It belongs to the SecD/SecF family. SecD subfamily. Forms a complex with SecF. Part of the essential Sec protein translocation apparatus which comprises SecA, SecYEG and auxiliary proteins SecDF. Other proteins may also be involved.

The protein resides in the cell inner membrane. Functionally, part of the Sec protein translocase complex. Interacts with the SecYEG preprotein conducting channel. SecDF uses the proton motive force (PMF) to complete protein translocation after the ATP-dependent function of SecA. This Leptotrichia buccalis (strain ATCC 14201 / DSM 1135 / JCM 12969 / NCTC 10249 / C-1013-b) protein is Protein translocase subunit SecD.